A 147-amino-acid polypeptide reads, in one-letter code: Small nuclear ribonucleoprotein-associated protein B (147 aa).

The region spanning 1–84 is the Sm domain; the sequence is MGTTKMVSLL…IVSLSVQGPP (84 aa). Disordered stretches follow at residues 87 to 106 and 128 to 147; these read DPSM…PAGR and APPP…FRPV.

It belongs to the snRNP SmB/SmN family. As to quaternary structure, belongs to the 40S cdc5-associated complex (or cwf complex), a spliceosome sub-complex reminiscent of a late-stage spliceosome composed of the U2, U5 and U6 snRNAs and at least brr2, cdc5, cwf2/prp3, cwf3/syf1, cwf4/syf3, cwf5/ecm2, spp42/cwf6, cwf7/spf27, cwf8, cwf9, cwf10, cwf11, cwf12, prp45/cwf13, cwf14, cwf15, cwf16, cwf17, cwf18, cwf19, cwf20, cwf21, cwf22, cwf23, cwf24, cwf25, cwf26, cyp7/cwf27, cwf28, cwf29/ist3, lea1, msl1, prp5/cwf1, prp10, prp12/sap130, prp17, prp22, sap61, sap62, sap114, sap145, slu7, smb1, smd1, smd3, smf1, smg1 and syf2.

The protein resides in the nucleus. The protein localises to the cytoplasm. Functionally, plays a role in pre-mRNA splicing as a core component of the spliceosomal U1, U2, U4 and U5 small nuclear ribonucleoproteins (snRNPs), the building blocks of the spliceosome. In Schizosaccharomyces pombe (strain 972 / ATCC 24843) (Fission yeast), this protein is Small nuclear ribonucleoprotein-associated protein B (smb1).